The primary structure comprises 216 residues: Protein-L-isoaspartate O-methyltransferase (216 aa).

Serine 64 is an active-site residue.

Belongs to the methyltransferase superfamily. L-isoaspartyl/D-aspartyl protein methyltransferase family.

The protein resides in the cytoplasm. It catalyses the reaction [protein]-L-isoaspartate + S-adenosyl-L-methionine = [protein]-L-isoaspartate alpha-methyl ester + S-adenosyl-L-homocysteine. Functionally, catalyzes the methyl esterification of L-isoaspartyl residues in peptides and proteins that result from spontaneous decomposition of normal L-aspartyl and L-asparaginyl residues. It plays a role in the repair and/or degradation of damaged proteins. The polypeptide is Protein-L-isoaspartate O-methyltransferase (Paracoccus denitrificans (strain Pd 1222)).